The chain runs to 437 residues: GTPase Obg (437 aa).

The 159-residue stretch at 2 to 160 (SLFLDTARIE…KILLLELRVL (159 aa)) folds into the Obg domain. The region spanning 161-338 (ADVGLVGFPS…LLARTSELLA (178 aa)) is the OBG-type G domain. GTP-binding positions include 167-174 (GFPSVGKS), 192-196 (FTTIT), 214-217 (DMPG), 284-287 (NKMD), and 319-321 (SGL). 2 residues coordinate Mg(2+): Ser174 and Thr194. The 79-residue stretch at 359–437 (GFEDEEKPFK…IQKFEFEFVD (79 aa)) folds into the OCT domain.

The protein belongs to the TRAFAC class OBG-HflX-like GTPase superfamily. OBG GTPase family. As to quaternary structure, monomer. Requires Mg(2+) as cofactor.

Its subcellular location is the cytoplasm. In terms of biological role, an essential GTPase which binds GTP, GDP and possibly (p)ppGpp with moderate affinity, with high nucleotide exchange rates and a fairly low GTP hydrolysis rate. Plays a role in control of the cell cycle, stress response, ribosome biogenesis and in those bacteria that undergo differentiation, in morphogenesis control. This chain is GTPase Obg, found in Lactococcus lactis subsp. cremoris (strain SK11).